The following is a 364-amino-acid chain: tRNA-specific 2-thiouridylase MnmA (364 aa).

ATP-binding positions include A6 to S13 and L32. C101 serves as the catalytic Nucleophile. C101 and C193 are joined by a disulfide. G125 lines the ATP pocket. Positions K143–Q145 are interaction with tRNA. Residue C193 is the Cysteine persulfide intermediate of the active site.

Belongs to the MnmA/TRMU family.

It is found in the cytoplasm. It carries out the reaction S-sulfanyl-L-cysteinyl-[protein] + uridine(34) in tRNA + AH2 + ATP = 2-thiouridine(34) in tRNA + L-cysteinyl-[protein] + A + AMP + diphosphate + H(+). Functionally, catalyzes the 2-thiolation of uridine at the wobble position (U34) of tRNA, leading to the formation of s(2)U34. The protein is tRNA-specific 2-thiouridylase MnmA of Rhodococcus opacus (strain B4).